The chain runs to 229 residues: PKHD-type hydroxylase RPD_3334 (229 aa).

Positions 78 to 180 constitute a Fe2OG dioxygenase domain; the sequence is QIFPPLFNRY…RVASFFWLQS (103 aa). Fe cation is bound by residues His98, Asp100, and His161. Arg171 serves as a coordination point for 2-oxoglutarate.

Fe(2+) serves as cofactor. Requires L-ascorbate as cofactor.

The chain is PKHD-type hydroxylase RPD_3334 from Rhodopseudomonas palustris (strain BisB5).